The primary structure comprises 533 residues: Tyrosine/DOPA decarboxylase 3 (533 aa).

K319 carries the N6-(pyridoxal phosphate)lysine modification.

It belongs to the group II decarboxylase family. As to quaternary structure, homodimer. It depends on pyridoxal 5'-phosphate as a cofactor. In terms of tissue distribution, roots.

The enzyme catalyses L-tyrosine + H(+) = tyramine + CO2. The catalysed reaction is L-dopa + H(+) = dopamine + CO2. It carries out the reaction 5-hydroxy-L-tryptophan + H(+) = serotonin + CO2. Functionally, marginally higher substrate specificity for L-DOPA over L-tyrosine. This is Tyrosine/DOPA decarboxylase 3 (TYDC3) from Papaver somniferum (Opium poppy).